Here is a 160-residue protein sequence, read N- to C-terminus: MSVLNTFLVIVALILCYVNDFPVTGHEVQLPPGTKFFCQECQMTAVIHVLKHRGCKPKAIPSFACIGKCTSYVQVSGSKIWQMERTCNCCQESGEREATVVLFCPDAQNEEKRFRKVSTKAPLQCMCRPCGSIEESSIIPQEVAGYSEEGPLYNHFRKSL.

An N-terminal signal peptide occupies residues 1–20; sequence MSVLNTFLVIVALILCYVND. The CTCK domain maps to 38–131; sequence CQECQMTAVI…PLQCMCRPCG (94 aa). Intrachain disulfides connect C41/C90, C55/C104, C65/C125, C69/C127, and C87/C130.

Heterodimer of burs and pburs.

It is found in the secreted. Its function is as follows. Final heterodimeric neurohormone released at the end of the molting cycle, involved in the sclerotization (tanning) of the insect cuticle, melanization and wing spreading. This chain is Bursicon, found in Bombyx mori (Silk moth).